The sequence spans 811 residues: Probable inorganic carbon transporter subunit DabA (811 aa).

Positions 336, 338, 498, and 513 each coordinate Zn(2+).

The protein belongs to the inorganic carbon transporter (TC 9.A.2) DabA family. As to quaternary structure, forms a complex with DabB. Zn(2+) serves as cofactor.

The protein resides in the cell inner membrane. Part of an energy-coupled inorganic carbon pump. The sequence is that of Probable inorganic carbon transporter subunit DabA from Rhodospirillum centenum (strain ATCC 51521 / SW).